A 300-amino-acid polypeptide reads, in one-letter code: Putative hydrolase ML2424 (300 aa).

The active-site Nucleophile is D56. Residues D56, D58, and D231 each contribute to the Mg(2+) site. D58 acts as the Proton donor in catalysis.

This sequence belongs to the HAD-like hydrolase superfamily. SerB family. Mg(2+) serves as cofactor.

This chain is Putative hydrolase ML2424, found in Mycobacterium leprae (strain TN).